The sequence spans 34 residues: Cytochrome b6-f complex subunit 7 (34 aa).

A helical transmembrane segment spans residues 9–29 (ALLSFGLIFVGWALGALLLKI).

This sequence belongs to the PetM family. As to quaternary structure, the 4 large subunits of the cytochrome b6-f complex are cytochrome b6, subunit IV (17 kDa polypeptide, PetD), cytochrome f and the Rieske protein, while the 4 small subunits are PetG, PetL, PetM and PetN. The complex functions as a dimer.

The protein resides in the cellular thylakoid membrane. Functionally, component of the cytochrome b6-f complex, which mediates electron transfer between photosystem II (PSII) and photosystem I (PSI), cyclic electron flow around PSI, and state transitions. In Nostoc sp. (strain PCC 7120 / SAG 25.82 / UTEX 2576), this protein is Cytochrome b6-f complex subunit 7.